The primary structure comprises 889 residues: Translation initiation factor IF-2 (889 aa).

2 disordered regions span residues Gly47–Val85 and Ala206–Pro302. Composition is skewed to basic and acidic residues over residues Gln52 to Pro61, Ala214 to Val241, and Ala252 to Gly263. The 170-residue stretch at Thr389–Thr558 folds into the tr-type G domain. The G1 stretch occupies residues Gly398–Thr405. Residue Gly398–Thr405 coordinates GTP. Residues Gly423–His427 form a G2 region. Residues Asp444 to Gly447 are G3. GTP is bound by residues Asp444–His448 and Asn498–Asp501. Positions Asn498 to Asp501 are G4. A G5 region spans residues Ser534–Lys536.

The protein belongs to the TRAFAC class translation factor GTPase superfamily. Classic translation factor GTPase family. IF-2 subfamily.

The protein resides in the cytoplasm. In terms of biological role, one of the essential components for the initiation of protein synthesis. Protects formylmethionyl-tRNA from spontaneous hydrolysis and promotes its binding to the 30S ribosomal subunits. Also involved in the hydrolysis of GTP during the formation of the 70S ribosomal complex. In Colwellia psychrerythraea (strain 34H / ATCC BAA-681) (Vibrio psychroerythus), this protein is Translation initiation factor IF-2.